Here is a 287-residue protein sequence, read N- to C-terminus: X-box-binding protein 1 (287 aa).

The region spanning 61 to 117 (EEKMDRRKLKNRVAAQNARDKKKERSAKIEDVMRDLVEENRRLRAENERLRRQNKNL) is the bZIP domain. Residues 63–87 (KMDRRKLKNRVAAQNARDKKKERSA) are disordered. The basic motif stretch occupies residues 63–88 (KMDRRKLKNRVAAQNARDKKKERSAK). Basic and acidic residues predominate over residues 78-87 (ARDKKKERSA). Residues 89 to 117 (IEDVMRDLVEENRRLRAENERLRRQNKNL) form a leucine-zipper region.

Interacts with SUMO-conjugating enzyme ubc-9; the interaction is direct. Post-translationally, sumoylated. Sumoylation may negatively modulate the transcription of genes involved in the ER-stress-response.

It localises to the nucleus. Its function is as follows. Required for transcriptional regulation of the unfolded protein response (UPR) in the endoplasmic reticulum (ER) under stressed conditions, acting downstream of ire-1, and also maintaining ER homeostasis via a negative feedback loop, in parallel with ER kinase pek-1. May also regulate Golgi protein trafficking distal to the ER. Protects the host organism from the detrimental effects of mounting an innate immune response to microbes, such as the Gram-negative bacterium P.aeruginosa, probably by modulating the UPR. In terms of biological role, plays a role in the unconventional cytoplasmic splicing processing of its own mRNA triggered by the endoplasmic reticulum (ER) transmembrane endoribonuclease ire-1: upon ER stress, the emerging xbp-1 polypeptide chain, as part of a mRNA-ribosome-nascent chain (R-RNC) complex, cotranslationally recruits its own unprocessed mRNA through transient docking to the ER membrane and translational pausing, therefore facilitating efficient ire-1-mediated xbp-1 mRNA isoform 2 production. Functionally, functions as a stress-inducible potent transcriptional activator during endoplasmic reticulum (ER) stress by inducing unfolded protein response (UPR) target genes via binding to the UPR element (UPRE). Plays a role in modulation of the UPR, lipid metabolism, proteostasis, and lifespan. In neurons, rescues stress resistance, increases longevity, and, drives expression of lysosomal genes in the intestine and activates the UPR in distal, non-neuronal cell types through a cell-nonautonomous mechanism. In neurons or intestine, plays a role in protection against proteotoxicity, acting via positive modulation of genes involved in lysosomal function, including lipases and the fatty-acid desaturase fat-6. Protection against proteotoxicity in neurons is dependent upon the transcription factor atf-6. The protein is X-box-binding protein 1 of Caenorhabditis elegans.